A 103-amino-acid chain; its full sequence is Small ribosomal subunit protein uS10 (103 aa).

It belongs to the universal ribosomal protein uS10 family. As to quaternary structure, part of the 30S ribosomal subunit.

Involved in the binding of tRNA to the ribosomes. This chain is Small ribosomal subunit protein uS10, found in Picrophilus torridus (strain ATCC 700027 / DSM 9790 / JCM 10055 / NBRC 100828 / KAW 2/3).